The following is a 742-amino-acid chain: Phosphoribosylformylglycinamidine synthase subunit PurL (742 aa).

The active site involves histidine 54. ATP contacts are provided by tyrosine 57 and lysine 96. Glutamate 98 lines the Mg(2+) pocket. Residues 99-102 (SHNH) and arginine 121 each bind substrate. The Proton acceptor role is filled by histidine 100. Aspartate 122 is a binding site for Mg(2+). Glutamine 245 serves as a coordination point for substrate. Aspartate 273 contributes to the Mg(2+) binding site. Residue 317-319 (ESQ) participates in substrate binding. ATP contacts are provided by aspartate 500 and glycine 537. Residue asparagine 538 participates in Mg(2+) binding. Serine 540 is a binding site for substrate.

This sequence belongs to the FGAMS family. In terms of assembly, monomer. Part of the FGAM synthase complex composed of 1 PurL, 1 PurQ and 2 PurS subunits.

Its subcellular location is the cytoplasm. It carries out the reaction N(2)-formyl-N(1)-(5-phospho-beta-D-ribosyl)glycinamide + L-glutamine + ATP + H2O = 2-formamido-N(1)-(5-O-phospho-beta-D-ribosyl)acetamidine + L-glutamate + ADP + phosphate + H(+). Its pathway is purine metabolism; IMP biosynthesis via de novo pathway; 5-amino-1-(5-phospho-D-ribosyl)imidazole from N(2)-formyl-N(1)-(5-phospho-D-ribosyl)glycinamide: step 1/2. Part of the phosphoribosylformylglycinamidine synthase complex involved in the purines biosynthetic pathway. Catalyzes the ATP-dependent conversion of formylglycinamide ribonucleotide (FGAR) and glutamine to yield formylglycinamidine ribonucleotide (FGAM) and glutamate. The FGAM synthase complex is composed of three subunits. PurQ produces an ammonia molecule by converting glutamine to glutamate. PurL transfers the ammonia molecule to FGAR to form FGAM in an ATP-dependent manner. PurS interacts with PurQ and PurL and is thought to assist in the transfer of the ammonia molecule from PurQ to PurL. This chain is Phosphoribosylformylglycinamidine synthase subunit PurL, found in Oceanobacillus iheyensis (strain DSM 14371 / CIP 107618 / JCM 11309 / KCTC 3954 / HTE831).